The sequence spans 225 residues: UPF0173 metal-dependent hydrolase PF1764 (225 aa).

It belongs to the UPF0173 family.

The polypeptide is UPF0173 metal-dependent hydrolase PF1764 (Pyrococcus furiosus (strain ATCC 43587 / DSM 3638 / JCM 8422 / Vc1)).